A 204-amino-acid polypeptide reads, in one-letter code: uncharacterized protein (204 aa).

As to expression, component of the acid-soluble organic matrix of the aragonitic skeleton (at protein level).

It is found in the secreted. This is an uncharacterized protein from Acropora millepora (Staghorn coral).